We begin with the raw amino-acid sequence, 122 residues long: Small ribosomal subunit protein uS13 (122 aa).

A disordered region spans residues 98–122 (VRGQRTHTNARTRKGPAKAIAGKKK).

Belongs to the universal ribosomal protein uS13 family. Part of the 30S ribosomal subunit. Forms a loose heterodimer with protein S19. Forms two bridges to the 50S subunit in the 70S ribosome.

In terms of biological role, located at the top of the head of the 30S subunit, it contacts several helices of the 16S rRNA. In the 70S ribosome it contacts the 23S rRNA (bridge B1a) and protein L5 of the 50S subunit (bridge B1b), connecting the 2 subunits; these bridges are implicated in subunit movement. Contacts the tRNAs in the A and P-sites. The chain is Small ribosomal subunit protein uS13 from Jannaschia sp. (strain CCS1).